Consider the following 334-residue polypeptide: MADHSTVNGSEIPVYNLKCIDLANPDVHQSAAVLKQACMESGIFYVINHGLSEELMNEFFGQMKKFFALPMDEKKKLFWNQSLRGYRPPAQAVIDNKTQQKDFGEAYHIGVDVAKDDPNCGKFFYGPNIWPPADILPGWKETMMRYQEETINVGRAIGRIIALALDLNVDFFDQPEILGNKTASYSNMFHYGVPGTDFSKEIVGAPPHCDLNFITLLATDEIWGLQICREKNAQPQLWEAIPPVKGAFIVNVGDMLEMLSNGAFRSILHRVVFGKERYSTGLFLCPSHDYVIECLPTCKSEDNPPKYPTIKTGDYILSRFRQLAADTVKDNKAV.

The 106-residue stretch at 181–286 (KTASYSNMFH…RYSTGLFLCP (106 aa)) folds into the Fe2OG dioxygenase domain. H208, D210, and H269 together coordinate Fe cation. Residue R277 participates in 2-oxoglutarate binding.

This sequence belongs to the iron/ascorbate-dependent oxidoreductase family. Fe(2+) serves as cofactor. In terms of tissue distribution, expressed in maturing fruits and in juice vesicles.

The catalysed reaction is (1R,2R,3S,8R,10R,11R,15S,16S)-3-(acetyloxy)-15-(1-hydroxy-4-oxobutan-2-yl)-2,7,7,11,16-pentamethyl-5-oxo-6-oxatetracyclo[9.7.0.0(2,8).0(12,16)]octadec-12-en-10-yl acetate + 2-oxoglutarate + O2 = kihadalactone A + succinate + CO2 + 2 H2O. It functions in the pathway secondary metabolite biosynthesis; terpenoid biosynthesis. Its function is as follows. 2-oxoglutarate-Fe(II) type oxidoreductase involved in the biosynthesis of limonoids triterpene natural products such as limonin, a compound with insecticidal activity responsible for the bitter taste in citrus. Catalyzes the formation of kihadalactone A. This chain is Kihadalactone A synthase LFS, found in Citrus sinensis (Sweet orange).